We begin with the raw amino-acid sequence, 453 residues long: Ethanolamine ammonia-lyase large subunit (453 aa).

Substrate is bound by residues arginine 160–glutamine 162 and asparagine 193. Adenosylcob(III)alamin contacts are provided by proline 194 and glutamine 246. Residue glutamate 287 participates in substrate binding. Serine 295 is a binding site for adenosylcob(III)alamin. Aspartate 362 is a substrate binding site. Residue methionine 401 coordinates adenosylcob(III)alamin.

This sequence belongs to the EutB family. The basic unit is a heterodimer which dimerizes to form tetramers. The heterotetramers trimerize; 6 large subunits form a core ring with 6 small subunits projecting outwards. The cofactor is adenosylcob(III)alamin.

The protein resides in the bacterial microcompartment. It carries out the reaction ethanolamine = acetaldehyde + NH4(+). The protein operates within amine and polyamine degradation; ethanolamine degradation. Its function is as follows. Catalyzes the deamination of various vicinal amino-alcohols to oxo compounds. Allows this organism to utilize ethanolamine as the sole source of nitrogen and carbon in the presence of vitamin B12. The protein is Ethanolamine ammonia-lyase large subunit of Escherichia coli O157:H7.